A 554-amino-acid chain; its full sequence is Glucose-binding protein GlcS (554 aa).

The Cytoplasmic portion of the chain corresponds to 1–17; it reads MKRKYPYSLAKGLTSTQ. The chain crosses the membrane as a helical span at residues 18–38; sequence IAVIVAVIVIVIIIGVVAGFV. The Extracellular segment spans residues 39 to 525; sequence LTKGPSTTAV…YGLTNNTQKT (487 aa). A helical membrane pass occupies residues 526-546; sequence SNSVMLFLLPFLALPLAIASI. Residues 547-554 lie on the Cytoplasmic side of the membrane; sequence DNKYYLLK.

This sequence belongs to the bacterial solute-binding protein 1 family. The complex is composed of two ATP-binding proteins (GlcV), two transmembrane proteins (GlcT and GlcU) and a solute-binding protein (GlcS).

It is found in the cell membrane. Its activity is regulated as follows. Binding of glucose is strongly inhibited by galactose and mannose. In terms of biological role, part of the ABC transporter complex GlcSTUV involved in glucose uptake. Binds glucose. Can also bind galactose and mannose. In Saccharolobus solfataricus (strain ATCC 35092 / DSM 1617 / JCM 11322 / P2) (Sulfolobus solfataricus), this protein is Glucose-binding protein GlcS.